The following is a 469-amino-acid chain: Glutamate--tRNA ligase (469 aa).

The short motif at 9-19 (PSPTGFLHVGG) is the 'HIGH' region element. Residues Cys-98, Cys-100, Cys-125, and Asp-127 each contribute to the Zn(2+) site. Residues 236 to 240 (KLSKR) carry the 'KMSKS' region motif. Position 239 (Lys-239) interacts with ATP.

It belongs to the class-I aminoacyl-tRNA synthetase family. Glutamate--tRNA ligase type 1 subfamily. In terms of assembly, monomer. Requires Zn(2+) as cofactor.

The protein resides in the cytoplasm. It carries out the reaction tRNA(Glu) + L-glutamate + ATP = L-glutamyl-tRNA(Glu) + AMP + diphosphate. Its function is as follows. Catalyzes the attachment of glutamate to tRNA(Glu) in a two-step reaction: glutamate is first activated by ATP to form Glu-AMP and then transferred to the acceptor end of tRNA(Glu). This Shewanella woodyi (strain ATCC 51908 / MS32) protein is Glutamate--tRNA ligase.